Reading from the N-terminus, the 141-residue chain is MRHGKAGRKLNRTASHRKAMFANMAASLIEHEQIVTTLPKAKEIRPIVEKLVTLGKRGDLHARRQAISQIRDVAVVSKLFDAIASRYATRNGGYLRIMKAGFRQGDNAPLAVIEFVDRDVDAKGSKDRARVSAEAEAAEAA.

Belongs to the bacterial ribosomal protein bL17 family. In terms of assembly, part of the 50S ribosomal subunit. Contacts protein L32.

The protein is Large ribosomal subunit protein bL17 of Rhizobium meliloti (strain 1021) (Ensifer meliloti).